We begin with the raw amino-acid sequence, 229 residues long: GTP:AMP phosphotransferase (229 aa).

Residue G10 to T15 coordinates a ribonucleoside 5'-triphosphate. The interval N30–V59 is NMP. AMP is bound by residues R36, N57–V59, G87, G87–R90, and Q94. Residues G123 to D170 form an LID region. Residue R178 participates in AMP binding.

Belongs to the adenylate kinase family.

It localises to the mitochondrion. It carries out the reaction a ribonucleoside 5'-triphosphate + AMP = a ribonucleoside 5'-diphosphate + ADP. It catalyses the reaction GTP + AMP = GDP + ADP. Its activity is regulated as follows. Inhibited by the dinucleoside pentaphosphate compound P1,P5-di(guanosine-5') pentaphosphate (GP5A). Its function is as follows. Catalyzes the reversible transfer of the terminal phosphate group between GTP and AMP. Has very low activity with UTP, ITP, CTP and IMP and no activity with ATP, GMP, CMP and UMP in vitro. The chain is GTP:AMP phosphotransferase from Plasmodium falciparum (isolate 3D7).